The sequence spans 180 residues: Large ribosomal subunit protein uL6 (180 aa).

This sequence belongs to the universal ribosomal protein uL6 family. Part of the 50S ribosomal subunit.

In terms of biological role, this protein binds to the 23S rRNA, and is important in its secondary structure. It is located near the subunit interface in the base of the L7/L12 stalk, and near the tRNA binding site of the peptidyltransferase center. In Clostridium botulinum (strain Alaska E43 / Type E3), this protein is Large ribosomal subunit protein uL6.